Here is a 340-residue protein sequence, read N- to C-terminus: Putative transport protein AF_1800 (340 aa).

7 helical membrane passes run 7 to 27, 57 to 77, 140 to 160, 193 to 213, 225 to 245, 260 to 280, and 290 to 310; these read LVLLLSILVVLALTFYFFTPL, SVIATAIVILPISVLMFYGLI, TLLILNFFISIVVCFYALADM, LWFGNFVVAILIGLVSLPFFL, GLMFLAALIPIFAEWMIILPV, FLLIGVVFLYVLPELILRPYF, and LVLMLAFIGGGLVGGISGFFI.

Belongs to the autoinducer-2 exporter (AI-2E) (TC 2.A.86) family.

Its subcellular location is the cell membrane. The polypeptide is Putative transport protein AF_1800 (Archaeoglobus fulgidus (strain ATCC 49558 / DSM 4304 / JCM 9628 / NBRC 100126 / VC-16)).